A 306-amino-acid chain; its full sequence is Aspartate carbamoyltransferase catalytic subunit (306 aa).

Residues R54 and T55 each contribute to the carbamoyl phosphate site. Position 83 (K83) interacts with L-aspartate. Residues R104, H132, and Q135 each coordinate carbamoyl phosphate. R165 and R227 together coordinate L-aspartate. Carbamoyl phosphate-binding residues include L266 and P267.

Belongs to the aspartate/ornithine carbamoyltransferase superfamily. ATCase family. Heterododecamer (2C3:3R2) of six catalytic PyrB chains organized as two trimers (C3), and six regulatory PyrI chains organized as three dimers (R2).

The catalysed reaction is carbamoyl phosphate + L-aspartate = N-carbamoyl-L-aspartate + phosphate + H(+). Its pathway is pyrimidine metabolism; UMP biosynthesis via de novo pathway; (S)-dihydroorotate from bicarbonate: step 2/3. In terms of biological role, catalyzes the condensation of carbamoyl phosphate and aspartate to form carbamoyl aspartate and inorganic phosphate, the committed step in the de novo pyrimidine nucleotide biosynthesis pathway. This chain is Aspartate carbamoyltransferase catalytic subunit, found in Clostridium novyi (strain NT).